The following is a 305-amino-acid chain: Acetyl-coenzyme A carboxylase carboxyl transferase subunit beta (305 aa).

The region spanning 25–294 is the CoA carboxyltransferase N-terminal domain; sequence VWTKCDSCGQ…PGNDDVEIRS (270 aa). Zn(2+) contacts are provided by C29, C32, C48, and C51. Residues 29–51 form a C4-type zinc finger; that stretch reads CDSCGQVLYRAELERNLGVCPKC. Residues 281-305 form a disordered region; sequence NHPEPGNDDVEIRSDAPSESSQDDA.

Belongs to the AccD/PCCB family. In terms of assembly, acetyl-CoA carboxylase is a heterohexamer composed of biotin carboxyl carrier protein (AccB), biotin carboxylase (AccC) and two subunits each of ACCase subunit alpha (AccA) and ACCase subunit beta (AccD). The cofactor is Zn(2+).

Its subcellular location is the cytoplasm. It carries out the reaction N(6)-carboxybiotinyl-L-lysyl-[protein] + acetyl-CoA = N(6)-biotinyl-L-lysyl-[protein] + malonyl-CoA. Its pathway is lipid metabolism; malonyl-CoA biosynthesis; malonyl-CoA from acetyl-CoA: step 1/1. In terms of biological role, component of the acetyl coenzyme A carboxylase (ACC) complex. Biotin carboxylase (BC) catalyzes the carboxylation of biotin on its carrier protein (BCCP) and then the CO(2) group is transferred by the transcarboxylase to acetyl-CoA to form malonyl-CoA. In Pectobacterium atrosepticum (strain SCRI 1043 / ATCC BAA-672) (Erwinia carotovora subsp. atroseptica), this protein is Acetyl-coenzyme A carboxylase carboxyl transferase subunit beta.